A 186-amino-acid polypeptide reads, in one-letter code: Small ribosomal subunit protein uS7 (186 aa).

This sequence belongs to the universal ribosomal protein uS7 family. In terms of assembly, part of the 30S ribosomal subunit.

In terms of biological role, one of the primary rRNA binding proteins, it binds directly to 16S rRNA where it nucleates assembly of the head domain of the 30S subunit. Is located at the subunit interface close to the decoding center. The polypeptide is Small ribosomal subunit protein uS7 (Methanothermobacter thermautotrophicus (strain ATCC 29096 / DSM 1053 / JCM 10044 / NBRC 100330 / Delta H) (Methanobacterium thermoautotrophicum)).